A 239-amino-acid polypeptide reads, in one-letter code: Geranylgeranylglyceryl phosphate synthase (239 aa).

Residues D18 and S45 each coordinate Mg(2+). Sn-glycerol 1-phosphate contacts are provided by residues 166–172 (YLEAGSG), 197–198 (GG), and 219–220 (GT).

The protein belongs to the GGGP/HepGP synthase family. Group II subfamily. Mg(2+) serves as cofactor.

It is found in the cytoplasm. The catalysed reaction is sn-glycerol 1-phosphate + (2E,6E,10E)-geranylgeranyl diphosphate = sn-3-O-(geranylgeranyl)glycerol 1-phosphate + diphosphate. It functions in the pathway membrane lipid metabolism; glycerophospholipid metabolism. Functionally, prenyltransferase that catalyzes the transfer of the geranylgeranyl moiety of geranylgeranyl diphosphate (GGPP) to the C3 hydroxyl of sn-glycerol-1-phosphate (G1P). This reaction is the first ether-bond-formation step in the biosynthesis of archaeal membrane lipids. The sequence is that of Geranylgeranylglyceryl phosphate synthase from Pyrobaculum aerophilum (strain ATCC 51768 / DSM 7523 / JCM 9630 / CIP 104966 / NBRC 100827 / IM2).